We begin with the raw amino-acid sequence, 339 residues long: UDP-glucose 4-epimerase (339 aa).

Residues 12–13 (FI), 32–37 (DNLCNS), 59–60 (DI), 81–85 (FAGLK), N100, S125, Y150, K154, and F179 contribute to the NAD(+) site. Substrate contacts are provided by S125 and Y150. Y150 functions as the Proton acceptor in the catalytic mechanism. Substrate contacts are provided by residues N180, 200 to 201 (NL), 217 to 219 (SVF), R232, and 293 to 296 (RAGD).

The protein belongs to the NAD(P)-dependent epimerase/dehydratase family. In terms of assembly, homodimer. NAD(+) serves as cofactor.

It catalyses the reaction UDP-alpha-D-glucose = UDP-alpha-D-galactose. The protein operates within carbohydrate metabolism; galactose metabolism. Involved in the metabolism of galactose. Plays an essential role in the incorporation of galactose into meningococcal lipopolysaccharide surface molecules, which are important for pathogenesis. Catalyzes the conversion of UDP-galactose (UDP-Gal) to UDP-glucose (UDP-Glc) through a mechanism involving the transient reduction of NAD. This chain is UDP-glucose 4-epimerase (galE), found in Neisseria meningitidis serogroup A / serotype 4A (strain DSM 15465 / Z2491).